Consider the following 753-residue polypeptide: Signal transducer and activator of transcription 1 (753 aa).

S2 is subject to N-acetylserine. 6 positions are modified to N6-methyllysine: K114, K175, K296, K366, K525, and K637. A coiled-coil region spans residues 136 to 317; it reads LDKHKELDSK…LFQQLIQSSF (182 aa). Residues 573-670 enclose the SH2 domain; that stretch reads WNDGCIVGFI…ENPLKYLYPN (98 aa). Residue E657 is modified to ADP-ribosyl glutamic acid. At K665 the chain carries N6-methyllysine. A Phosphotyrosine; by JAK1, JAK2 or TYK2 modification is found at Y701. K703 participates in a covalent cross-link: Glycyl lysine isopeptide (Lys-Gly) (interchain with G-Cter in SUMO1); alternate. A Glycyl lysine isopeptide (Lys-Gly) (interchain with G-Cter in SUMO2); alternate cross-link involves residue K703. E705 is modified (ADP-ribosyl glutamic acid). A Phosphoserine; by IKKE modification is found at S708. Phosphoserine; by MAPK14 is present on S727. T749 bears the Phosphothreonine mark.

Belongs to the transcription factor STAT family. In terms of assembly, homodimerizes upon IFN-gamma induced phosphorylation. Heterodimer with STAT2 upon IFN-alpha/beta induced phosphorylation. The heterodimer STAT1:STAT2 forms the interferon-stimulated gene factor 3 complex (ISGF3) with IRF9. Interacts (phosphorylated at Ser-727) with PIAS1; the interaction results in release of STAT1 from its target gene. Interacts with IFNAR1. Interacts with IFNAR2. Found in a complex with NMI and CREBBP/CBP. Interacts with NMI which is required for CREBBP/CBP recruitment to the complex. Interacts with PTK2/FAK1. Interacts with SRC. Interacts with ERBB4 (phosphorylated). Interacts with PARP9 and DTX3L independently of IFN-beta or IFN-gamma-mediated STAT1 'Tyr-701' phosphorylation. Interacts with histone acetyltransferase EP300/p300 in response to INF-gamma stimulation. Independently of its phosphorylation status, interacts with OTOP1. Interacts with IFNGR1. Interacts with STAT4. As to quaternary structure, (Microbial infection) Interacts with African swine fever virus (ASFV) MGF360-9L; this interaction mediates degradation of STAT1 through apoptosis. Phosphorylated on tyrosine and serine residues in response to a variety of cytokines/growth hormones including IFN-alpha, IFN-gamma, PDGF and EGF. Activated KIT promotes phosphorylation on tyrosine residues and subsequent translocation to the nucleus. Upon EGF stimulation, phosphorylation on Tyr-701 (lacking in beta form) by JAK1, JAK2 or TYK2 promotes dimerization and subsequent translocation to the nucleus. Growth hormone (GH) activates STAT1 signaling only via JAK2. Tyrosine phosphorylated in response to constitutively activated FGFR1, FGFR2, FGFR3 and FGFR4. Phosphorylation on Ser-727 by several kinases including MAPK14, ERK1/2 and CAMK2/CAMKII in response to IFN-gamma stimulation, is required for maximal transcriptional activity. Phosphorylated on Ser-727 by CAMK2/CAMKII in response to IFN-gamma stimulation and calcium mobilization, promoting activity. Phosphorylated by CAMK2/CAMKII in response to IFN-beta stimulation and calcium mobilization in epithelial cells, promoting activity. Phosphorylation on Ser-727 promotes sumoylation though increasing interaction with PIAS. Phosphorylation on Ser-727 by PRKCD induces apoptosis in response to DNA-damaging agents. Phosphorylated on tyrosine residues when PTK2/FAK1 is activated; most likely this is catalyzed by a SRC family kinase. Dephosphorylation on tyrosine residues by PTPN2 negatively regulates interferon-mediated signaling. Upon viral infection or IFN induction, phosphorylation on Ser-708 occurs much later than phosphorylation on Tyr-701 and is required for the binding of ISGF3 on the ISREs of a subset of IFN-stimulated genes IKBKE-dependent. Phosphorylation at Tyr-701 and Ser-708 are mutually exclusive, phosphorylation at Ser-708 requires previous dephosphorylation of Tyr-701. Phosphorylation at Thr-749 by IKBKB/IKKB promotes transcriptional activation of ARID5A and IL12B by STAT1. Phosphorylation at Thr-749 restricts interferon signaling and anti-inflammatory responses and promotes innate inflammatory responses. In terms of processing, sumoylated with SUMO1, SUMO2 and SUMO3. Sumoylation is enhanced by IFN-gamma-induced phosphorylation on Ser-727, and by interaction with PIAS proteins. Enhances the transactivation activity. Post-translationally, ISGylated. Mono-ADP-ribosylated at Glu-657 and Glu-705 by PARP14; ADP-ribosylation prevents phosphorylation at Tyr-701. However, the role of ADP-ribosylation in the prevention of phosphorylation has been called into question and the lack of phosphorylation may be due to sumoylation of Lys-703. In terms of processing, monomethylated at Lys-525 by SETD2; monomethylation is necessary for phosphorylation at Tyr-701, translocation into the nucleus and activation of the antiviral defense. Post-translationally, deubiquitinated by USP13; leading to STAT1 stabilization and positive regulation of type I and type II IFN signalings.

The protein localises to the cytoplasm. The protein resides in the nucleus. Its function is as follows. Signal transducer and transcription activator that mediates cellular responses to interferons (IFNs), cytokine KITLG/SCF and other cytokines and other growth factors. Following type I IFN (IFN-alpha and IFN-beta) binding to cell surface receptors, signaling via protein kinases leads to activation of Jak kinases (TYK2 and JAK1) and to tyrosine phosphorylation of STAT1 and STAT2. The phosphorylated STATs dimerize and associate with ISGF3G/IRF-9 to form a complex termed ISGF3 transcription factor, that enters the nucleus. ISGF3 binds to the IFN stimulated response element (ISRE) to activate the transcription of IFN-stimulated genes (ISG), which drive the cell in an antiviral state. In response to type II IFN (IFN-gamma), STAT1 is tyrosine- and serine-phosphorylated. It then forms a homodimer termed IFN-gamma-activated factor (GAF), migrates into the nucleus and binds to the IFN gamma activated sequence (GAS) to drive the expression of the target genes, inducing a cellular antiviral state. Becomes activated in response to KITLG/SCF and KIT signaling. May mediate cellular responses to activated FGFR1, FGFR2, FGFR3 and FGFR4. Following bacterial lipopolysaccharide (LPS)-induced TLR4 endocytosis, phosphorylated at Thr-749 by IKBKB which promotes binding of STAT1 to the 5'-TTTGAGGC-3' sequence in the ARID5A promoter, resulting in transcriptional activation of ARID5A and subsequent ARID5A-mediated stabilization of IL6. Phosphorylation at Thr-749 also promotes binding of STAT1 to the 5'-TTTGAGTC-3' sequence in the IL12B promoter and activation of IL12B transcription. Involved in food tolerance in small intestine: associates with the Gasdermin-D, p13 cleavage product (13 kDa GSDMD) and promotes transcription of CIITA, inducing type 1 regulatory T (Tr1) cells in upper small intestine. The protein is Signal transducer and activator of transcription 1 (STAT1) of Sus scrofa (Pig).